Consider the following 244-residue polypeptide: Large ribosomal subunit protein uL30A (244 aa).

The interval 1-26 (MAAEKILTPESQLKKSKAQQKTAEQV) is disordered.

It belongs to the universal ribosomal protein uL30 family. In terms of assembly, component of the large ribosomal subunit (LSU). Mature yeast ribosomes consist of a small (40S) and a large (60S) subunit. The 40S small subunit contains 1 molecule of ribosomal RNA (18S rRNA) and 33 different proteins (encoded by 57 genes). The large 60S subunit contains 3 rRNA molecules (25S, 5.8S and 5S rRNA) and 46 different proteins (encoded by 81 genes).

The protein resides in the cytoplasm. Its function is as follows. Component of the ribosome, a large ribonucleoprotein complex responsible for the synthesis of proteins in the cell. The small ribosomal subunit (SSU) binds messenger RNAs (mRNAs) and translates the encoded message by selecting cognate aminoacyl-transfer RNA (tRNA) molecules. The large subunit (LSU) contains the ribosomal catalytic site termed the peptidyl transferase center (PTC), which catalyzes the formation of peptide bonds, thereby polymerizing the amino acids delivered by tRNAs into a polypeptide chain. The nascent polypeptides leave the ribosome through a tunnel in the LSU and interact with protein factors that function in enzymatic processing, targeting, and the membrane insertion of nascent chains at the exit of the ribosomal tunnel. The polypeptide is Large ribosomal subunit protein uL30A (Saccharomyces cerevisiae (strain ATCC 204508 / S288c) (Baker's yeast)).